The sequence spans 205 residues: Cytochrome c biogenesis ATP-binding export protein CcmA (205 aa).

The region spanning 2–204 (LEVSNLTAIR…SPKLRKIKLG (203 aa)) is the ABC transporter domain. ATP is bound at residue 34 to 41 (GRNGTGKT).

This sequence belongs to the ABC transporter superfamily. CcmA exporter (TC 3.A.1.107) family. In terms of assembly, the complex is composed of two ATP-binding proteins (CcmA) and two transmembrane proteins (CcmB).

The protein localises to the cell inner membrane. It carries out the reaction heme b(in) + ATP + H2O = heme b(out) + ADP + phosphate + H(+). Its function is as follows. Part of the ABC transporter complex CcmAB involved in the biogenesis of c-type cytochromes; once thought to export heme, this seems not to be the case, but its exact role is uncertain. Responsible for energy coupling to the transport system. The polypeptide is Cytochrome c biogenesis ATP-binding export protein CcmA (Vibrio vulnificus (strain CMCP6)).